We begin with the raw amino-acid sequence, 276 residues long: NH(3)-dependent NAD(+) synthetase (276 aa).

Gly43–Ser50 provides a ligand contact to ATP. Mg(2+) is bound at residue Asp49. Residue Arg146 participates in deamido-NAD(+) binding. Thr166 lines the ATP pocket. Glu171 is a Mg(2+) binding site. Positions 179 and 186 each coordinate deamido-NAD(+). ATP-binding residues include Lys195 and Thr217. Position 266-267 (His266–Lys267) interacts with deamido-NAD(+).

It belongs to the NAD synthetase family. As to quaternary structure, homodimer.

It catalyses the reaction deamido-NAD(+) + NH4(+) + ATP = AMP + diphosphate + NAD(+) + H(+). It functions in the pathway cofactor biosynthesis; NAD(+) biosynthesis; NAD(+) from deamido-NAD(+) (ammonia route): step 1/1. Functionally, catalyzes the ATP-dependent amidation of deamido-NAD to form NAD. Uses ammonia as a nitrogen source. The sequence is that of NH(3)-dependent NAD(+) synthetase from Shewanella frigidimarina (strain NCIMB 400).